We begin with the raw amino-acid sequence, 338 residues long: Photosystem II assembly lipoprotein Ycf48 (338 aa).

The signal sequence occupies residues 1–23 (MKRLFSNVINLTLVLIVGVALSG). The N-palmitoyl cysteine moiety is linked to residue cysteine 24. Cysteine 24 is lipidated: S-diacylglycerol cysteine.

It belongs to the Ycf48 family. Part of early PSII assembly complexes which includes D1 (psbA) and PsbI; not found in mature PSII. Binds to the lumenal side of PSII complexes. Interacts with YidC.

Its subcellular location is the cellular thylakoid membrane. Functionally, a factor required for optimal assembly of photosystem II (PSII), acting in the early stages of PSII assembly. Also plays a role in replacement of photodamaged D1 (psbA). Assists YidC in synthesis of chlorophyll-binding proteins. This is Photosystem II assembly lipoprotein Ycf48 from Prochlorococcus marinus (strain NATL2A).